The primary structure comprises 363 residues: Neutral protease 2 homolog MEP7 (363 aa).

The signal sequence occupies residues 1-19 (MLLCSMVAALAALATPAFS). The propeptide occupies 20 to 181 (CALPHLDLPE…ARAIQPLDRR (162 aa)). Intrachain disulfides connect Cys187-Cys259 and Cys266-Cys284. His308 serves as a coordination point for Zn(2+). Residue Glu309 is part of the active site. Zn(2+) contacts are provided by His312 and Asp323.

This sequence belongs to the peptidase M35 family. It depends on Zn(2+) as a cofactor.

The protein resides in the secreted. It catalyses the reaction Preferential cleavage of bonds with hydrophobic residues in P1'. Also 3-Asn-|-Gln-4 and 8-Gly-|-Ser-9 bonds in insulin B chain.. Its function is as follows. Secreted metalloproteinase that allows assimilation of proteinaceous substrates. Shows high activities on basic nuclear substrates such as histone and protamine. May be involved in virulence. The protein is Neutral protease 2 homolog MEP7 (MEP7) of Coccidioides posadasii (strain C735) (Valley fever fungus).